Here is an 877-residue protein sequence, read N- to C-terminus: Alanine--tRNA ligase (877 aa).

Zn(2+) contacts are provided by histidine 567, histidine 571, cysteine 669, and histidine 673.

Belongs to the class-II aminoacyl-tRNA synthetase family. It depends on Zn(2+) as a cofactor.

The protein resides in the cytoplasm. It carries out the reaction tRNA(Ala) + L-alanine + ATP = L-alanyl-tRNA(Ala) + AMP + diphosphate. Catalyzes the attachment of alanine to tRNA(Ala) in a two-step reaction: alanine is first activated by ATP to form Ala-AMP and then transferred to the acceptor end of tRNA(Ala). Also edits incorrectly charged Ser-tRNA(Ala) and Gly-tRNA(Ala) via its editing domain. The polypeptide is Alanine--tRNA ligase (Rickettsia rickettsii (strain Iowa)).